The chain runs to 321 residues: Lambda-crystallin homolog (321 aa).

S6 is modified (phosphoserine). NAD(+)-binding positions include 19–20, D39, E100, and K105; that span reads LI.

The protein belongs to the 3-hydroxyacyl-CoA dehydrogenase family. In terms of assembly, homodimer.

Its subcellular location is the cytoplasm. The enzyme catalyses L-gulonate + NAD(+) = 3-dehydro-L-gulonate + NADH + H(+). Its activity is regulated as follows. Inhibited by malonate. Functionally, has high L-gulonate 3-dehydrogenase activity. It also exhibits low dehydrogenase activity toward L-3-hydroxybutyrate (HBA) and L-threonate. The polypeptide is Lambda-crystallin homolog (CRYL1) (Bos taurus (Bovine)).